Reading from the N-terminus, the 388-residue chain is MNKEELLKKYEATSNEKAKDVFFSPGRINVIGEHTDYNGGHVFPAPISLGVYGVYGPRDDKKVRLYSGNVDGDIVEFDIDDTNVEKDEDRFWANYFKGMITYLREKYDGIDHGFNLYIEANLPSGSGLSSSAAIEMLMGIILKDEFNLDVDRVSLAKMGQRTENEFIGLNSGIMDQFACIMGKKNSAIFLDCNTLKYEYLPLALGDYEIIIMATNNPHTLADSAYNNRVAECGRALKKLQQKLDIKALGELDNDTFDEYSYLINDETEIKRARHAVSENQRTLRATQAMKDGDLEKLGRLINASHESLHYDYEVTGKELDTLAEASWKQPGVLGARMIGGGFGGSAIAIVKKSEAENFKKNVGKIYRDAVGYDASFYDAEIVDGTKRI.

Position 33–36 (33–36 (EHTD)) interacts with substrate. ATP-binding positions include Ser-67 and 125–131 (GSGLSSS). The Mg(2+) site is built by Ser-131 and Glu-163. The active-site Proton acceptor is the Asp-175. Substrate is bound at residue Tyr-225.

It belongs to the GHMP kinase family. GalK subfamily.

Its subcellular location is the cytoplasm. It catalyses the reaction alpha-D-galactose + ATP = alpha-D-galactose 1-phosphate + ADP + H(+). It participates in carbohydrate metabolism; galactose metabolism. In terms of biological role, catalyzes the transfer of the gamma-phosphate of ATP to D-galactose to form alpha-D-galactose-1-phosphate (Gal-1-P). The protein is Galactokinase of Lactobacillus helveticus (Lactobacillus suntoryeus).